A 278-amino-acid chain; its full sequence is Anamorsin homolog (278 aa).

Positions 1-147 (MESVSHLVSN…EIGSSAALPF (147 aa)) are N-terminal SAM-like domain. Positions 147-191 (FANKISLGGNSKMETAKMWTLSSQDFVDDDIDIIDENTLIEEDDF) are linker. Residues Cys-204, Cys-214, Cys-217, and Cys-219 each contribute to the [2Fe-2S] cluster site. Residues 204–219 (CDSAKKKRKACKNCSC) form a fe-S binding site A region. The [4Fe-4S] cluster site is built by Cys-239, Cys-242, Cys-250, and Cys-253. 2 short sequence motifs (cx2C motif) span residues 239–242 (CGSC) and 250–253 (CSSC). The tract at residues 239–253 (CGSCYLGDAFRCSSC) is fe-S binding site B.

Belongs to the anamorsin family. In terms of assembly, monomer. Requires [2Fe-2S] cluster as cofactor. The cofactor is [4Fe-4S] cluster.

It localises to the cytoplasm. The protein resides in the mitochondrion intermembrane space. Functionally, component of the cytosolic iron-sulfur (Fe-S) protein assembly (CIA) machinery. Required for the maturation of extramitochondrial Fe-S proteins. Part of an electron transfer chain functioning in an early step of cytosolic Fe-S biogenesis, facilitating the de novo assembly of a [4Fe-4S] cluster on the cytosolic Fe-S scaffold complex. Electrons are transferred from NADPH via a FAD- and FMN-containing diflavin oxidoreductase. Together with the diflavin oxidoreductase, also required for the assembly of the diferric tyrosyl radical cofactor of ribonucleotide reductase (RNR), probably by providing electrons for reduction during radical cofactor maturation in the catalytic small subunit. The polypeptide is Anamorsin homolog (Trichoplax adhaerens (Trichoplax reptans)).